Consider the following 286-residue polypeptide: NAD kinase (286 aa).

Catalysis depends on Asp-66, which acts as the Proton acceptor. Residues 66 to 67, 137 to 138, Arg-148, Arg-165, Asp-167, and 178 to 183 contribute to the NAD(+) site; these read DG, ND, and TAYSMS.

It belongs to the NAD kinase family. A divalent metal cation serves as cofactor.

It is found in the cytoplasm. It catalyses the reaction NAD(+) + ATP = ADP + NADP(+) + H(+). Its function is as follows. Involved in the regulation of the intracellular balance of NAD and NADP, and is a key enzyme in the biosynthesis of NADP. Catalyzes specifically the phosphorylation on 2'-hydroxyl of the adenosine moiety of NAD to yield NADP. The polypeptide is NAD kinase (Chlorobium chlorochromatii (strain CaD3)).